We begin with the raw amino-acid sequence, 381 residues long: uncharacterized protein (381 aa).

2 disordered regions span residues 1 to 20 (MPYYTRDDNDVDDFDEFDPT) and 36 to 381 (IPPS…EDDE). The span at 9 to 18 (NDVDDFDEFD) shows a compositional bias: acidic residues. Composition is skewed to basic and acidic residues over residues 166–175 (TEVEYGRRPE) and 186–237 (SESE…EGYR). Ser339, Ser346, and Ser357 each carry phosphoserine. Over residues 364-374 (KKHRHKHHHQK) the composition is skewed to basic residues.

This is an uncharacterized protein from Arabidopsis thaliana (Mouse-ear cress).